The chain runs to 219 residues: Orotidine 5'-phosphate decarboxylase (219 aa).

Substrate contacts are provided by residues Asp-10, Lys-32, 58–67 (DFKVADIPYT), Ser-113, 163–173 (PGIGAQGGDPY), Gly-186, and Arg-187. Residue Lys-60 is the Proton donor of the active site.

The protein belongs to the OMP decarboxylase family. Type 1 subfamily. In terms of assembly, homodimer.

It carries out the reaction orotidine 5'-phosphate + H(+) = UMP + CO2. The protein operates within pyrimidine metabolism; UMP biosynthesis via de novo pathway; UMP from orotate: step 2/2. In terms of biological role, catalyzes the decarboxylation of orotidine 5'-monophosphate (OMP) to uridine 5'-monophosphate (UMP). This is Orotidine 5'-phosphate decarboxylase from Thermoplasma volcanium (strain ATCC 51530 / DSM 4299 / JCM 9571 / NBRC 15438 / GSS1).